Here is a 159-residue protein sequence, read N- to C-terminus: Phosphopantetheine adenylyltransferase (159 aa).

Thr-10 contacts substrate. ATP-binding positions include 10–11 (TF) and His-18. The substrate site is built by Lys-42, Met-74, and Arg-88. ATP is bound by residues 89–91 (GLR), Glu-99, and 124–130 (WSFISSS).

It belongs to the bacterial CoaD family. Homohexamer. The cofactor is Mg(2+).

It is found in the cytoplasm. It catalyses the reaction (R)-4'-phosphopantetheine + ATP + H(+) = 3'-dephospho-CoA + diphosphate. It participates in cofactor biosynthesis; coenzyme A biosynthesis; CoA from (R)-pantothenate: step 4/5. Reversibly transfers an adenylyl group from ATP to 4'-phosphopantetheine, yielding dephospho-CoA (dPCoA) and pyrophosphate. This is Phosphopantetheine adenylyltransferase from Klebsiella pneumoniae subsp. pneumoniae (strain ATCC 700721 / MGH 78578).